Here is a 116-residue protein sequence, read N- to C-terminus: Large ribosomal subunit protein bL19 (116 aa).

Belongs to the bacterial ribosomal protein bL19 family.

Its function is as follows. This protein is located at the 30S-50S ribosomal subunit interface and may play a role in the structure and function of the aminoacyl-tRNA binding site. The protein is Large ribosomal subunit protein bL19 of Clostridium novyi (strain NT).